We begin with the raw amino-acid sequence, 364 residues long: MNVLFAGGGTGGHLYPAVAMAGELQKRVPHVKLSFAGTEAGIEAREIPRLGYRLHLLSVRGLKRGRSLGALVDNLGVLADFIGAVRSALAIINSESPDVVVGTGGFVSAPLLLAAQMRGKKTLIQEQNAFPGVTTKLLSLFASEIHLSFEEAKPYIARKKEVYISGNPSRSFSAIDPDQARLRFGLAESLPTLLVFGGSRGARSINNAVLKWLDQITASANLIWQTGSLDYERIKAGVTSSARIWIGPYIENMGEAYAASELVVCRAGASTIAEVTNTAKPSVLVPYPHATGDHQRHNARALAENGAALLIDDEHLQAPESRQLVLDLLHDRTRRSAMSKAALLLAYPDATAALVDRIIRLAKS.

UDP-N-acetyl-alpha-D-glucosamine is bound by residues Thr10–Gly12, Asn128, Arg170, Ser199, Ile250, and Gln295.

This sequence belongs to the glycosyltransferase 28 family. MurG subfamily.

The protein localises to the cell inner membrane. It carries out the reaction di-trans,octa-cis-undecaprenyl diphospho-N-acetyl-alpha-D-muramoyl-L-alanyl-D-glutamyl-meso-2,6-diaminopimeloyl-D-alanyl-D-alanine + UDP-N-acetyl-alpha-D-glucosamine = di-trans,octa-cis-undecaprenyl diphospho-[N-acetyl-alpha-D-glucosaminyl-(1-&gt;4)]-N-acetyl-alpha-D-muramoyl-L-alanyl-D-glutamyl-meso-2,6-diaminopimeloyl-D-alanyl-D-alanine + UDP + H(+). The protein operates within cell wall biogenesis; peptidoglycan biosynthesis. In terms of biological role, cell wall formation. Catalyzes the transfer of a GlcNAc subunit on undecaprenyl-pyrophosphoryl-MurNAc-pentapeptide (lipid intermediate I) to form undecaprenyl-pyrophosphoryl-MurNAc-(pentapeptide)GlcNAc (lipid intermediate II). The polypeptide is UDP-N-acetylglucosamine--N-acetylmuramyl-(pentapeptide) pyrophosphoryl-undecaprenol N-acetylglucosamine transferase (Chlorobium phaeobacteroides (strain DSM 266 / SMG 266 / 2430)).